Here is a 441-residue protein sequence, read N- to C-terminus: FAM10 family protein At4g22670 (441 aa).

The disordered stretch occupies residues 41–114 (KIPTGVHEED…PQKMGDSSVE (74 aa)). A compositionally biased stretch (basic and acidic residues) spans 46–55 (VHEEDKDTKP). 2 stretches are compositionally biased toward acidic residues: residues 61-71 (EESDDDMDETE) and 78-102 (EEEE…EPDN). 2 positions are modified to phosphoserine: Ser-63 and Ser-89. TPR repeat units follow at residues 121 to 156 (EAAQ…NPTS), 158 to 190 (IMYG…NPDS), and 191 to 224 (AKGY…DYDE). Residues 236–285 (NAHKLEEHRRKYDRLRKEREDKKAERDRLRRRAEAQAAYDKAKKEEQSSS) adopt a coiled-coil conformation. Positions 244 to 282 (RRKYDRLRKEREDKKAERDRLRRRAEAQAAYDKAKKEEQ) are enriched in basic and acidic residues. The disordered stretch occupies residues 244-314 (RRKYDRLRKE…MPGGFPGGMG (71 aa)). Positions 289 to 314 (SGGGFPGGMPGGFPGGMPGGFPGGMG) are enriched in gly residues. In terms of domain architecture, STI1 spans 391–430 (DPELMTAFSDPEVMAALQDVMKNPANLAKHQANPKVAPVI).

Belongs to the FAM10 family.

The polypeptide is FAM10 family protein At4g22670 (Arabidopsis thaliana (Mouse-ear cress)).